We begin with the raw amino-acid sequence, 71 residues long: Large ribosomal subunit protein eL38 (71 aa).

This sequence belongs to the eukaryotic ribosomal protein eL38 family.

This is Large ribosomal subunit protein eL38 (RpL38) from Ixodes scapularis (Black-legged tick).